The chain runs to 349 residues: Phosphoribosylformylglycinamidine cyclo-ligase (349 aa).

Belongs to the AIR synthase family.

It is found in the cytoplasm. It catalyses the reaction 2-formamido-N(1)-(5-O-phospho-beta-D-ribosyl)acetamidine + ATP = 5-amino-1-(5-phospho-beta-D-ribosyl)imidazole + ADP + phosphate + H(+). It functions in the pathway purine metabolism; IMP biosynthesis via de novo pathway; 5-amino-1-(5-phospho-D-ribosyl)imidazole from N(2)-formyl-N(1)-(5-phospho-D-ribosyl)glycinamide: step 2/2. This chain is Phosphoribosylformylglycinamidine cyclo-ligase, found in Bordetella parapertussis (strain 12822 / ATCC BAA-587 / NCTC 13253).